We begin with the raw amino-acid sequence, 34 residues long: Photosystem II reaction center protein T (34 aa).

The helical transmembrane segment at 3-23 threads the bilayer; it reads ALVYTFLLVSTLGIIFFAIFF.

Belongs to the PsbT family. PSII is composed of 1 copy each of membrane proteins PsbA, PsbB, PsbC, PsbD, PsbE, PsbF, PsbH, PsbI, PsbJ, PsbK, PsbL, PsbM, PsbT, PsbY, PsbZ, Psb30/Ycf12, at least 3 peripheral proteins of the oxygen-evolving complex and a large number of cofactors. It forms dimeric complexes.

The protein localises to the plastid. It is found in the chloroplast thylakoid membrane. Functionally, found at the monomer-monomer interface of the photosystem II (PS II) dimer, plays a role in assembly and dimerization of PSII. PSII is a light-driven water plastoquinone oxidoreductase, using light energy to abstract electrons from H(2)O, generating a proton gradient subsequently used for ATP formation. This Solanum bulbocastanum (Wild potato) protein is Photosystem II reaction center protein T.